Reading from the N-terminus, the 220-residue chain is Uracil-DNA glycosylase (220 aa).

D65 (proton acceptor) is an active-site residue.

It belongs to the uracil-DNA glycosylase (UDG) superfamily. UNG family.

It localises to the cytoplasm. The enzyme catalyses Hydrolyzes single-stranded DNA or mismatched double-stranded DNA and polynucleotides, releasing free uracil.. Its function is as follows. Excises uracil residues from the DNA which can arise as a result of misincorporation of dUMP residues by DNA polymerase or due to deamination of cytosine. The polypeptide is Uracil-DNA glycosylase (Leuconostoc mesenteroides subsp. mesenteroides (strain ATCC 8293 / DSM 20343 / BCRC 11652 / CCM 1803 / JCM 6124 / NCDO 523 / NBRC 100496 / NCIMB 8023 / NCTC 12954 / NRRL B-1118 / 37Y)).